Here is a 701-residue protein sequence, read N- to C-terminus: Polyribonucleotide nucleotidyltransferase (701 aa).

Mg(2+)-binding residues include Asp483 and Asp489. The region spanning 550–609 (PRIYTLHIPTDKIRDVIGPGGKVIRGIIEQTGVKIDVEDDGTIHVASADEASANKAIQII) is the KH domain. The S1 motif domain occupies 619–686 (GKTYLGKVVR…EGNKIKLSRK (68 aa)).

This sequence belongs to the polyribonucleotide nucleotidyltransferase family. It depends on Mg(2+) as a cofactor.

It localises to the cytoplasm. It catalyses the reaction RNA(n+1) + phosphate = RNA(n) + a ribonucleoside 5'-diphosphate. Involved in mRNA degradation. Catalyzes the phosphorolysis of single-stranded polyribonucleotides processively in the 3'- to 5'-direction. The polypeptide is Polyribonucleotide nucleotidyltransferase (Solibacter usitatus (strain Ellin6076)).